A 188-amino-acid chain; its full sequence is Sec-independent protein translocase protein TatB (188 aa).

A helical membrane pass occupies residues 1–21; it reads MFDIGWSELVVIGVVALVAIG. Positions 147–188 are disordered; it reads LPVPAETHALATTDLAPPDLAHPAPAHPEPTNSEPAKDAKAS. Positions 160 to 170 are enriched in low complexity; sequence DLAPPDLAHPA.

It belongs to the TatB family. As to quaternary structure, the Tat system comprises two distinct complexes: a TatABC complex, containing multiple copies of TatA, TatB and TatC subunits, and a separate TatA complex, containing only TatA subunits. Substrates initially bind to the TatABC complex, which probably triggers association of the separate TatA complex to form the active translocon.

It localises to the cell inner membrane. In terms of biological role, part of the twin-arginine translocation (Tat) system that transports large folded proteins containing a characteristic twin-arginine motif in their signal peptide across membranes. Together with TatC, TatB is part of a receptor directly interacting with Tat signal peptides. TatB may form an oligomeric binding site that transiently accommodates folded Tat precursor proteins before their translocation. This chain is Sec-independent protein translocase protein TatB, found in Rhodopseudomonas palustris (strain HaA2).